The chain runs to 310 residues: MRKALYSLLFYMCICLYIYTPVFMANLKEIEVGNYFICNLRDYPTGNCSVDHDYNKTIKLLCPIVNNKNNSNKTYDPSYCFKYDGIKDEFIINNKQAYIHNTLPGVILTNNIENDTYNLSIYPPFVVKEDVTIVCICDSEKGNEGITPYLKINIKKTHGLNNDLEGDYIKGCDYGNNQGKYKFLTKPVKYTSNPICEIDAYPGDVVGINCNSYTTKMQGARLEPEGCFAMVYFSILTMKFIKTNVNNIMPNAKYYPDLASHPGNQNSKIFLTSYLLIPNEVDRDILIYCNCSYNGNKGLAIYRIFSTKAS.

The first 24 residues, 1-24 (MRKALYSLLFYMCICLYIYTPVFM), serve as a signal peptide directing secretion. 2 consecutive 6-Cys domains span residues 25–157 (ANLK…IKKT) and 168–309 (YIKG…STKA). Disulfide bonds link Cys38-Cys48, Cys62-Cys137, Cys80-Cys135, Cys172-Cys196, Cys210-Cys291, and Cys227-Cys289. 3 N-linked (GlcNAc...) asparagine glycosylation sites follow: Asn72, Asn114, and Asn118. Residue Asn290 is glycosylated (N-linked (GlcNAc...) asparagine).

The protein localises to the cell surface. It localises to the cell membrane. Functionally, involved in sporozoite infection of hepatocytes and replication therein. The sequence is that of Sporozoite surface protein P36 (P36) from Plasmodium yoelii yoelii.